The sequence spans 145 residues: uncharacterized protein (145 aa).

The tract at residues 62 to 145 (LPSVGGRMTA…QLPQQGGCPG (84 aa)) is disordered. Residues 84-95 (ASSPEDPPLPHP) show a composition bias toward pro residues.

This is an uncharacterized protein from Homo sapiens (Human).